The chain runs to 243 residues: Probable septum site-determining protein MinC (243 aa).

The protein belongs to the MinC family. As to quaternary structure, interacts with MinD and FtsZ.

Cell division inhibitor that blocks the formation of polar Z ring septums. Rapidly oscillates between the poles of the cell to destabilize FtsZ filaments that have formed before they mature into polar Z rings. Prevents FtsZ polymerization. This Agathobacter rectalis (strain ATCC 33656 / DSM 3377 / JCM 17463 / KCTC 5835 / VPI 0990) (Eubacterium rectale) protein is Probable septum site-determining protein MinC.